The following is a 320-amino-acid chain: Cytochrome f (320 aa).

The N-terminal stretch at 1-35 (MENRNTFSWVKEQMTRSISVSIMIYVITQTSISNA) is a signal peptide. The heme site is built by Tyr36, Cys56, Cys59, and His60. Residues 286-306 (VQGLLFFFASVILAQVFLVLK) form a helical membrane-spanning segment.

This sequence belongs to the cytochrome f family. The 4 large subunits of the cytochrome b6-f complex are cytochrome b6, subunit IV (17 kDa polypeptide, petD), cytochrome f and the Rieske protein, while the 4 small subunits are PetG, PetL, PetM and PetN. The complex functions as a dimer. The cofactor is heme.

The protein resides in the plastid. It localises to the chloroplast thylakoid membrane. Component of the cytochrome b6-f complex, which mediates electron transfer between photosystem II (PSII) and photosystem I (PSI), cyclic electron flow around PSI, and state transitions. The chain is Cytochrome f from Agrostis stolonifera (Creeping bentgrass).